Consider the following 317-residue polypeptide: R-spondin-3 (317 aa).

The signal sequence occupies residues 1–20; it reads MQLQLISIVLILHFMEYTNC. FU repeat units follow at residues 34-86, 92-135, and 139-183; these read SGVS…GFYG, RNDC…GLVP, and KKEC…EFEP. Disulfide bonds link C41-C48, C45-C54, C57-C76, C80-C95, C98-C105, C102-C111, C114-C125, C129-C189, C195-C237, C206-C213, and C246-C253. An N-linked (GlcNAc...) asparagine glycan is attached at N184. The 61-residue stretch at 194–254 folds into the TSP type-1 domain; the sequence is HCEVSEWSEW…ECFVKKKRCK (61 aa). The segment covering 251 to 268 has biased composition (basic residues); that stretch reads KRCKPPKGQRRGEKKKRF. A disordered region spans residues 251–317; the sequence is KRCKPPKGQR…RDQSRDAGTV (67 aa). A compositionally biased stretch (basic and acidic residues) spans 274–303; the sequence is VTAEARRERKREREKETIDREESENRNKTE. N-linked (GlcNAc...) asparagine glycosylation occurs at N300.

It belongs to the R-spondin family. In terms of assembly, binds heparin.

Its subcellular location is the secreted. Its function is as follows. Activator of the canonical Wnt signaling pathway by acting as a ligand for lgr4-6 receptors, which acts as a key regulator of angiogenesis. Upon binding to lgr4-6 (lgr4, lgr5 or lgr6), lgr4-6 associate with phosphorylated lrp6 and frizzled receptors that are activated by extracellular Wnt receptors, triggering the canonical Wnt signaling pathway to increase expression of target genes. Acts both in the canonical. Wnt/beta-catenin-dependent pathway and in non-canonical Wnt signaling pathway. Acts as a key regulator of angiogenesis by controlling vascular stability and pruning: acts by activating the non-canonical Wnt signaling pathway in endothelial cells. Can also amplify Wnt signaling pathway independently of LGR4-6 receptors, possibly by acting as a direct antagonistic ligand to RNF43 and ZNRF3. The sequence is that of R-spondin-3 (rspo3) from Danio rerio (Zebrafish).